We begin with the raw amino-acid sequence, 681 residues long: Pumilio domain-containing protein C6G9.14 (681 aa).

Disordered stretches follow at residues 180–210 (RPGL…PGLI) and 273–322 (ASTA…NVPS). 2 stretches are compositionally biased toward low complexity: residues 187 to 210 (TPGP…PGLI) and 273 to 286 (ASTA…SSGS). A PUM-HD domain is found at 319–659 (NVPSLISDDP…RILSKLERRH (341 aa)). 8 Pumilio repeats span residues 342-378 (SLQN…AVFA), 379-414 (ETHP…TFIQ), 415-451 (IIAP…CIVN), 452-487 (ALRP…FIFD), 488-523 (AICE…QLVE), 524-559 (HIVP…AIIS), 560-595 (YFLY…KLIS), and 596-633 (ELMD…ELVE). The segment covering 656-666 (ERRHPSSKEKP) has biased composition (basic and acidic residues). The segment at 656-681 (ERRHPSSKEKPIVYSNSERVNTSSSA) is disordered. A compositionally biased stretch (polar residues) spans 669–681 (YSNSERVNTSSSA).

The polypeptide is Pumilio domain-containing protein C6G9.14 (Schizosaccharomyces pombe (strain 972 / ATCC 24843) (Fission yeast)).